A 225-amino-acid polypeptide reads, in one-letter code: Ureidoacrylate amidohydrolase RutB (225 aa).

The active-site Proton acceptor is D22. The active site involves K131. C164 acts as the Nucleophile in catalysis.

Belongs to the isochorismatase family. RutB subfamily.

The enzyme catalyses (Z)-3-ureidoacrylate + H2O + H(+) = (Z)-3-aminoacrylate + NH4(+) + CO2. It catalyses the reaction (Z)-3-ureidoacrylate + H2O = (Z)-3-aminoacrylate + carbamate + H(+). It carries out the reaction (Z)-2-methylureidoacrylate + H2O + H(+) = (Z)-2-methylaminoacrylate + NH4(+) + CO2. Hydrolyzes ureidoacrylate to form aminoacrylate and carbamate. The carbamate hydrolyzes spontaneously, thereby releasing one of the nitrogen atoms of the pyrimidine ring as ammonia and one of its carbon atoms as CO2. In Caulobacter vibrioides (strain ATCC 19089 / CIP 103742 / CB 15) (Caulobacter crescentus), this protein is Ureidoacrylate amidohydrolase RutB.